The chain runs to 100 residues: uncharacterized protein (100 aa).

This is an uncharacterized protein from Enterobacteria phage T4 (Bacteriophage T4).